We begin with the raw amino-acid sequence, 839 residues long: LPS-assembly protein LptD (839 aa).

A signal peptide spans 1 to 21 (MAIGITACVLSLINYQGLAYS).

The protein belongs to the LptD family. Component of the lipopolysaccharide transport and assembly complex. Interacts with LptE and LptA.

The protein resides in the cell outer membrane. Functionally, together with LptE, is involved in the assembly of lipopolysaccharide (LPS) at the surface of the outer membrane. The sequence is that of LPS-assembly protein LptD from Legionella pneumophila (strain Lens).